The primary structure comprises 292 residues: Homoserine kinase (292 aa).

An ATP-binding site is contributed by 84–94 (PLSRGLGSSSA).

This sequence belongs to the GHMP kinase family. Homoserine kinase subfamily.

Its subcellular location is the cytoplasm. The enzyme catalyses L-homoserine + ATP = O-phospho-L-homoserine + ADP + H(+). It functions in the pathway amino-acid biosynthesis; L-threonine biosynthesis; L-threonine from L-aspartate: step 4/5. In terms of biological role, catalyzes the ATP-dependent phosphorylation of L-homoserine to L-homoserine phosphate. The chain is Homoserine kinase from Campylobacter jejuni subsp. doylei (strain ATCC BAA-1458 / RM4099 / 269.97).